The primary structure comprises 119 residues: gSG7 salivary protein (119 aa).

Cystine bridges form between cysteine 58–cysteine 113 and cysteine 81–cysteine 91.

It localises to the secreted. Its activity is regulated as follows. The activity is increased in the presence of host properdin (CFP). Salivary protein that inhibits the alternative pathway of complement system activation in the host while having no inhibitory effect on the classical pathway. Inhibits activity of activated host C3-convertase complex C3bBb (C3-CFB). Enhances accumulation of C3bBb on immobilized properdin. The protein is gSG7 salivary protein of Anopheles freeborni (Western malaria mosquito).